The sequence spans 534 residues: Probable inorganic phosphate transporter 1-8 (534 aa).

Residues 1–21 (MPIKVLSSLDVARTQWYHFKA) are Cytoplasmic-facing. Residues 22-42 (IIVAGMGLFTDAYDLFCIAPV) form a helical membrane-spanning segment. Residues 43–61 (MKMISHVYYNGDSINTAVL) are Extracellular-facing. A helical membrane pass occupies residues 62–82 (STSYAIALLGTATGQLVFGYL). The Cytoplasmic segment spans residues 83–90 (GDRVGRRR). A helical membrane pass occupies residues 91–111 (VYGLCLIIMILSSFGCGFSVC). Topologically, residues 112-123 (TTRRSCVMVSLG) are extracellular. Residues 124-144 (FFRFFLGLGIGGDYPLSATIM) form a helical membrane-spanning segment. Topologically, residues 145–153 (SEFANKRTR) are cytoplasmic. A helical membrane pass occupies residues 154–174 (GAFIAAVFSMQGLGILVSSAV). The Extracellular portion of the chain corresponds to 175–199 (TMAVCVAFKRSGGGLEVDAAAPTEA). The helical transmembrane segment at 200-220 (DLAWRLILMIGALPAALTFYW) threads the bilayer. The Cytoplasmic segment spans residues 221-281 (RMLMPETARY…KLFSRCFFRL (61 aa)). A helical transmembrane segment spans residues 282-302 (HGRDLFAASFNWFLVDIVFYT). Topologically, residues 303 to 333 (SNLLLSHIFSHYSKKPSTAENVYDAAFEVAE) are extracellular. A helical transmembrane segment spans residues 334 to 354 (LGAIIAACSTIPGYWFTVYFI). The Cytoplasmic segment spans residues 355–361 (DKIGRVK). A helical transmembrane segment spans residues 362-382 (IQIMGFFFMAVIYLVAGIPYS). The Extracellular segment spans residues 383-396 (WYWSKHEHNNKGFM). The chain crosses the membrane as a helical span at residues 397 to 417 (VLYGLVFFFCNFGPNTTTFII). The Cytoplasmic segment spans residues 418 to 431 (PAEHFPARFRSTCH). Residues 432–452 (GISGAAGKLGAIVGTVGFLWA) form a helical membrane-spanning segment. The Extracellular segment spans residues 453-472 (TKKMESDDKNQIYPEVNRMR). Residues 473-493 (IAFLILGGVCIAGILVTYFFT) form a helical membrane-spanning segment. At 494–534 (KETMGRSLEENEHDQDNNAESEDEPQIVDGQSSVSTLLQTR) the chain is on the cytoplasmic side. The interval 501–534 (LEENEHDQDNNAESEDEPQIVDGQSSVSTLLQTR) is disordered. The span at 510 to 519 (NNAESEDEPQ) shows a compositional bias: acidic residues. Residue S514 is modified to Phosphoserine. Polar residues predominate over residues 522–534 (DGQSSVSTLLQTR).

It belongs to the major facilitator superfamily. Phosphate:H(+) symporter (TC 2.A.1.9) family. As to expression, in roots.

The protein localises to the membrane. In terms of biological role, high-affinity transporter for external inorganic phosphate. The polypeptide is Probable inorganic phosphate transporter 1-8 (PHT1-8) (Arabidopsis thaliana (Mouse-ear cress)).